We begin with the raw amino-acid sequence, 701 residues long: Vacuolar protein sorting-associated protein 52 B (701 aa).

2 coiled-coil regions span residues F23–E45 and Q511–L533.

It belongs to the VPS52 family. Component of the Golgi-associated retrograde protein (GARP) complex. In terms of tissue distribution, detected in pollen.

Its subcellular location is the golgi apparatus. It is found in the trans-Golgi network membrane. The protein localises to the endosome membrane. It localises to the golgi apparatus membrane. May be involved in retrograde transport of early and late endosomes to the late Golgi. The polypeptide is Vacuolar protein sorting-associated protein 52 B (P2) (Arabidopsis thaliana (Mouse-ear cress)).